Reading from the N-terminus, the 328-residue chain is Malate dehydrogenase (328 aa).

Residue 11-17 coordinates NAD(+); sequence GAAGQIG. R94 and R100 together coordinate substrate. NAD(+) is bound by residues N107, Q114, and 131 to 133; that span reads VGN. N133 and R164 together coordinate substrate. Residue H189 is the Proton acceptor of the active site.

The protein belongs to the LDH/MDH superfamily. MDH type 2 family.

The catalysed reaction is (S)-malate + NAD(+) = oxaloacetate + NADH + H(+). Its function is as follows. Catalyzes the reversible oxidation of malate to oxaloacetate. The protein is Malate dehydrogenase of Xanthomonas campestris pv. campestris (strain B100).